The chain runs to 20 residues: Phosphoglycerate kinase (20 aa).

A disordered region spans residues 1–20; sequence MNKKSIRNVNLKGKRVFDRV.

The protein belongs to the phosphoglycerate kinase family. As to quaternary structure, monomer.

Its subcellular location is the cytoplasm. The catalysed reaction is (2R)-3-phosphoglycerate + ATP = (2R)-3-phospho-glyceroyl phosphate + ADP. It functions in the pathway carbohydrate degradation; glycolysis; pyruvate from D-glyceraldehyde 3-phosphate: step 2/5. The protein is Phosphoglycerate kinase of Bacillus cereus.